Here is a 215-residue protein sequence, read N- to C-terminus: Cytochrome b6 (215 aa).

A helical membrane pass occupies residues 32-52 (IFYCLGGITLTCFLVQVATGF). C35 serves as a coordination point for heme c. Heme b contacts are provided by H86 and H100. A run of 3 helical transmembrane segments spans residues 90-110 (ASMM…TGGF), 116-136 (LTWV…VTGY), and 186-206 (LHTF…FPMI). Heme b-binding residues include H187 and H202.

The protein belongs to the cytochrome b family. PetB subfamily. The 4 large subunits of the cytochrome b6-f complex are cytochrome b6, subunit IV (17 kDa polypeptide, PetD), cytochrome f and the Rieske protein, while the 4 small subunits are PetG, PetL, PetM and PetN. The complex functions as a dimer. Requires heme b as cofactor. Heme c serves as cofactor.

The protein localises to the plastid. It is found in the chloroplast thylakoid membrane. Functionally, component of the cytochrome b6-f complex, which mediates electron transfer between photosystem II (PSII) and photosystem I (PSI), cyclic electron flow around PSI, and state transitions. The protein is Cytochrome b6 of Agrostis stolonifera (Creeping bentgrass).